Consider the following 179-residue polypeptide: uncharacterized protein (179 aa).

Basic and acidic residues predominate over residues methionine 1–asparagine 14. 2 disordered regions span residues methionine 1–cysteine 90 and histidine 121–valine 147. 2 stretches are compositionally biased toward low complexity: residues lysine 15–cysteine 90 and arginine 126–aspartate 137. The span at glutamine 138–valine 147 shows a compositional bias: basic and acidic residues.

This is an uncharacterized protein from Dictyostelium discoideum (Social amoeba).